The chain runs to 639 residues: Chaperone protein DnaK (639 aa).

The residue at position 198 (Thr-198) is a Phosphothreonine; by autocatalysis. The disordered stretch occupies residues 602–639 (QAKSQAQGGDNADAGKQANATADDVVDAEFEEVKDDKK). Residues 625 to 639 (DVVDAEFEEVKDDKK) show a composition bias toward acidic residues.

Belongs to the heat shock protein 70 family.

Acts as a chaperone. This chain is Chaperone protein DnaK, found in Shewanella baltica (strain OS155 / ATCC BAA-1091).